Here is a 406-residue protein sequence, read N- to C-terminus: Tyrosine--tRNA ligase (406 aa).

Residue Y39 participates in L-tyrosine binding. Residues 44–53 (PTADSLHVGH) carry the 'HIGH' region motif. Residues Y172 and Q176 each coordinate L-tyrosine. Residues 232–236 (KMGKT) carry the 'KMSKS' region motif. K235 is an ATP binding site. Positions 344–404 (KELLDVLVDR…LGKKKFYNIV (61 aa)) constitute an S4 RNA-binding domain.

The protein belongs to the class-I aminoacyl-tRNA synthetase family. TyrS type 1 subfamily. As to quaternary structure, homodimer.

It localises to the cytoplasm. It carries out the reaction tRNA(Tyr) + L-tyrosine + ATP = L-tyrosyl-tRNA(Tyr) + AMP + diphosphate + H(+). Functionally, catalyzes the attachment of tyrosine to tRNA(Tyr) in a two-step reaction: tyrosine is first activated by ATP to form Tyr-AMP and then transferred to the acceptor end of tRNA(Tyr). The protein is Tyrosine--tRNA ligase of Fusobacterium nucleatum subsp. nucleatum (strain ATCC 25586 / DSM 15643 / BCRC 10681 / CIP 101130 / JCM 8532 / KCTC 2640 / LMG 13131 / VPI 4355).